The chain runs to 152 residues: 3-hydroxyacyl-[acyl-carrier-protein] dehydratase FabZ (152 aa).

The active site involves His57.

This sequence belongs to the thioester dehydratase family. FabZ subfamily.

It is found in the cytoplasm. The enzyme catalyses a (3R)-hydroxyacyl-[ACP] = a (2E)-enoyl-[ACP] + H2O. In terms of biological role, involved in unsaturated fatty acids biosynthesis. Catalyzes the dehydration of short chain beta-hydroxyacyl-ACPs and long chain saturated and unsaturated beta-hydroxyacyl-ACPs. This is 3-hydroxyacyl-[acyl-carrier-protein] dehydratase FabZ from Xanthomonas axonopodis pv. citri (strain 306).